The chain runs to 191 residues: Putative glutathione-dependent formaldehyde-activating enzyme (191 aa).

The 147-residue stretch at 20–166 (FAGGKLRCHC…FKALGLQTYD (147 aa)) folds into the CENP-V/GFA domain. Residues Cys-27, Cys-29, Cys-48, Cys-50, Cys-53, Cys-95, and Cys-98 each coordinate Zn(2+).

It belongs to the Gfa family. The cofactor is Zn(2+).

It carries out the reaction S-(hydroxymethyl)glutathione = glutathione + formaldehyde. It participates in one-carbon metabolism; formaldehyde degradation; formate from formaldehyde (glutathione route): step 1/3. Functionally, catalyzes the condensation of formaldehyde and glutathione to S-hydroxymethylglutathione. The sequence is that of Putative glutathione-dependent formaldehyde-activating enzyme from Penicillium rubens (strain ATCC 28089 / DSM 1075 / NRRL 1951 / Wisconsin 54-1255) (Penicillium chrysogenum).